A 238-amino-acid polypeptide reads, in one-letter code: Uridylate kinase (238 aa).

12-15 contacts ATP; it reads KLSG. Glycine 54 provides a ligand contact to UMP. Glycine 55 and arginine 59 together coordinate ATP. UMP is bound by residues aspartate 74 and 135 to 142; that span reads TGNPFFTT. 3 residues coordinate ATP: threonine 162, tyrosine 168, and aspartate 171.

The protein belongs to the UMP kinase family. In terms of assembly, homohexamer.

Its subcellular location is the cytoplasm. It catalyses the reaction UMP + ATP = UDP + ADP. It functions in the pathway pyrimidine metabolism; CTP biosynthesis via de novo pathway; UDP from UMP (UMPK route): step 1/1. Inhibited by UTP. In terms of biological role, catalyzes the reversible phosphorylation of UMP to UDP. In Dechloromonas aromatica (strain RCB), this protein is Uridylate kinase.